The primary structure comprises 104 residues: L-rhamnose mutarotase (104 aa).

A substrate-binding site is contributed by tyrosine 18. Residue histidine 22 is the Proton donor of the active site. Residues tyrosine 41 and 76-77 (WW) each bind substrate.

It belongs to the rhamnose mutarotase family. Homodimer.

The protein resides in the cytoplasm. The catalysed reaction is alpha-L-rhamnose = beta-L-rhamnose. It participates in carbohydrate metabolism; L-rhamnose metabolism. Involved in the anomeric conversion of L-rhamnose. The sequence is that of L-rhamnose mutarotase from Sinorhizobium fredii (strain NBRC 101917 / NGR234).